The chain runs to 58 residues: Small ribosomal subunit protein bS21 (58 aa).

Residues 35–58 (REHYEKPSVKKKKKSEAARKRKFK) are disordered. The span at 43 to 58 (VKKKKKSEAARKRKFK) shows a compositional bias: basic residues.

Belongs to the bacterial ribosomal protein bS21 family.

The sequence is that of Small ribosomal subunit protein bS21 from Clostridium botulinum (strain Alaska E43 / Type E3).